Here is a 408-residue protein sequence, read N- to C-terminus: Sex comb on midleg-like protein 4 (408 aa).

A phosphoserine mark is found at serine 55 and serine 65. Residues 274–338 are disordered; it reads AGGPATTTSG…TRRPSSRNPS (65 aa). Over residues 278–287 the composition is skewed to polar residues; that stretch reads ATTTSGSRTN. Residues 288 to 306 show a composition bias toward low complexity; sequence PVPSGGSSSPGLRLPASSP. The 67-residue stretch at 340 to 406 folds into the SAM domain; that stretch reads WTVEDVVRFV…CYHIDKLKQA (67 aa).

The protein belongs to the SCM family.

The protein localises to the nucleus. Putative Polycomb group (PcG) protein. PcG proteins act by forming multiprotein complexes, which are required to maintain the transcriptionally repressive state of homeotic genes throughout development. The sequence is that of Sex comb on midleg-like protein 4 (Scml4) from Mus musculus (Mouse).